Reading from the N-terminus, the 81-residue chain is Cytotoxin 8 (81 aa).

The N-terminal stretch at 1–21 (MKTLLLTLVVVTIVCLDLGYT) is a signal peptide. 4 cysteine pairs are disulfide-bonded: C24-C42, C35-C59, C63-C74, and C75-C80.

The protein belongs to the three-finger toxin family. Short-chain subfamily. Type IA cytotoxin sub-subfamily. In terms of assembly, monomer in solution; Homodimer and oligomer in the presence of negatively charged lipids forming a pore with a size ranging between 20 and 30 Angstroms. As to expression, expressed by the venom gland.

The protein localises to the secreted. It is found in the target cell membrane. Shows cytolytic activity on many different cells by forming pore in lipid membranes. In vivo, increases heart rate or kills the animal by cardiac arrest. In addition, it binds to heparin with high affinity, interacts with Kv channel-interacting protein 1 (KCNIP1) in a calcium-independent manner, and binds to integrin alpha-V/beta-3 (ITGAV/ITGB3) with moderate affinity. The polypeptide is Cytotoxin 8 (Naja atra (Chinese cobra)).